Reading from the N-terminus, the 47-residue chain is Large ribosomal subunit protein bL34 (47 aa).

It belongs to the bacterial ribosomal protein bL34 family.

In Mycobacterium ulcerans (strain Agy99), this protein is Large ribosomal subunit protein bL34.